Consider the following 604-residue polypeptide: uncharacterized protein (604 aa).

This sequence belongs to the glycosyltransferase 2 family.

This is an uncharacterized protein from Rickettsia conorii (strain ATCC VR-613 / Malish 7).